Consider the following 65-residue polypeptide: Large ribosomal subunit protein bL35 (65 aa).

The tract at residues asparagine 28–alanine 53 is disordered. A compositionally biased stretch (basic residues) spans lysine 36–histidine 45.

This sequence belongs to the bacterial ribosomal protein bL35 family.

This is Large ribosomal subunit protein bL35 from Chlorobium luteolum (strain DSM 273 / BCRC 81028 / 2530) (Pelodictyon luteolum).